Consider the following 244-residue polypeptide: Octanoyltransferase (244 aa).

The BPL/LPL catalytic domain occupies 49–237 (VAPGNFLIFC…HLTALFELHI (189 aa)). Substrate contacts are provided by residues 94 to 101 (RGGDITYH), 167 to 169 (AMG), and 180 to 182 (GFA). C198 acts as the Acyl-thioester intermediate in catalysis.

It belongs to the LipB family.

Its subcellular location is the cytoplasm. It catalyses the reaction octanoyl-[ACP] + L-lysyl-[protein] = N(6)-octanoyl-L-lysyl-[protein] + holo-[ACP] + H(+). It functions in the pathway protein modification; protein lipoylation via endogenous pathway; protein N(6)-(lipoyl)lysine from octanoyl-[acyl-carrier-protein]: step 1/2. In terms of biological role, catalyzes the transfer of endogenously produced octanoic acid from octanoyl-acyl-carrier-protein onto the lipoyl domains of lipoate-dependent enzymes. Lipoyl-ACP can also act as a substrate although octanoyl-ACP is likely to be the physiological substrate. The protein is Octanoyltransferase of Cytophaga hutchinsonii (strain ATCC 33406 / DSM 1761 / CIP 103989 / NBRC 15051 / NCIMB 9469 / D465).